Consider the following 364-residue polypeptide: SVP1-like protein 2 (364 aa).

2 WD repeats span residues 173–213 and 218–257; these read AHDS…KICE and YQHT…NTIR.

It belongs to the WD repeat PROPPIN family.

It is found in the vacuole membrane. It localises to the cytoplasmic vesicle membrane. The protein resides in the preautophagosomal structure membrane. Functionally, involved in mitochondrial or peroxisomal functions and amino acid signaling pathways. The polypeptide is SVP1-like protein 2 (hsv2) (Schizosaccharomyces pombe (strain 972 / ATCC 24843) (Fission yeast)).